Reading from the N-terminus, the 503-residue chain is Probable DNA ligase (503 aa).

An ATP-binding site is contributed by E210. K212 acts as the N6-AMP-lysine intermediate in catalysis. 6 residues coordinate ATP: R217, R232, E261, F296, R367, and K373.

Belongs to the ATP-dependent DNA ligase family. Mg(2+) serves as cofactor.

It catalyses the reaction ATP + (deoxyribonucleotide)n-3'-hydroxyl + 5'-phospho-(deoxyribonucleotide)m = (deoxyribonucleotide)n+m + AMP + diphosphate.. In terms of biological role, DNA ligase that seals nicks in double-stranded DNA during DNA replication, DNA recombination and DNA repair. The polypeptide is Probable DNA ligase (Rhodococcus opacus (strain B4)).